Consider the following 186-residue polypeptide: Potassium-transporting ATPase KdpC subunit (186 aa).

A helical membrane pass occupies residues Leu10–Gly30.

The protein belongs to the KdpC family. As to quaternary structure, the system is composed of three essential subunits: KdpA, KdpB and KdpC.

The protein resides in the cell membrane. Functionally, part of the high-affinity ATP-driven potassium transport (or Kdp) system, which catalyzes the hydrolysis of ATP coupled with the electrogenic transport of potassium into the cytoplasm. This subunit acts as a catalytic chaperone that increases the ATP-binding affinity of the ATP-hydrolyzing subunit KdpB by the formation of a transient KdpB/KdpC/ATP ternary complex. This is Potassium-transporting ATPase KdpC subunit from Staphylococcus aureus (strain COL).